Reading from the N-terminus, the 409-residue chain is Argininosuccinate synthase (409 aa).

ATP contacts are provided by residues 11–19 (AYSGGLDTS) and Ala-38. Residues Tyr-91 and Ser-96 each contribute to the L-citrulline site. Residue Gly-121 coordinates ATP. L-aspartate-binding residues include Thr-123, Asn-127, and Asp-128. An L-citrulline-binding site is contributed by Asn-127. Residues Arg-131, Ser-182, Ser-191, Glu-267, and Tyr-279 each coordinate L-citrulline.

This sequence belongs to the argininosuccinate synthase family. Type 1 subfamily. In terms of assembly, homotetramer.

It is found in the cytoplasm. It carries out the reaction L-citrulline + L-aspartate + ATP = 2-(N(omega)-L-arginino)succinate + AMP + diphosphate + H(+). It participates in amino-acid biosynthesis; L-arginine biosynthesis; L-arginine from L-ornithine and carbamoyl phosphate: step 2/3. In Nitrobacter winogradskyi (strain ATCC 25391 / DSM 10237 / CIP 104748 / NCIMB 11846 / Nb-255), this protein is Argininosuccinate synthase.